We begin with the raw amino-acid sequence, 501 residues long: NAD(P)H-quinone oxidoreductase chain 4, chloroplastic (501 aa).

Transmembrane regions (helical) follow at residues 5–25 (FPWL…IFFL), 38–58 (TCIC…HFQL), 88–108 (IGPI…AWPV), 114–131 (LFYL…GLFS), 135–155 (LLLF…LLSM), 168–188 (FILY…GMGL), 209–229 (ALEI…SPII), 243–263 (HYST…YGLI), 273–293 (AHSL…IYAA), 306–326 (IACS…SITD), 331–351 (GAIL…FLSG), 387–407 (LALP…GIIT), 417–437 (ILIT…LLSM), and 464–484 (FVSI…DCVF).

This sequence belongs to the complex I subunit 4 family.

Its subcellular location is the plastid. It is found in the chloroplast thylakoid membrane. It catalyses the reaction a plastoquinone + NADH + (n+1) H(+)(in) = a plastoquinol + NAD(+) + n H(+)(out). It carries out the reaction a plastoquinone + NADPH + (n+1) H(+)(in) = a plastoquinol + NADP(+) + n H(+)(out). This chain is NAD(P)H-quinone oxidoreductase chain 4, chloroplastic, found in Dioscorea elephantipes (Elephant's foot yam).